A 1032-amino-acid chain; its full sequence is Error-prone DNA polymerase (1032 aa).

Belongs to the DNA polymerase type-C family. DnaE2 subfamily.

It localises to the cytoplasm. The enzyme catalyses DNA(n) + a 2'-deoxyribonucleoside 5'-triphosphate = DNA(n+1) + diphosphate. DNA polymerase involved in damage-induced mutagenesis and translesion synthesis (TLS). It is not the major replicative DNA polymerase. This is Error-prone DNA polymerase from Hahella chejuensis (strain KCTC 2396).